Consider the following 94-residue polypeptide: Co-chaperonin GroES (94 aa).

It belongs to the GroES chaperonin family. Heptamer of 7 subunits arranged in a ring. Interacts with the chaperonin GroEL.

It localises to the cytoplasm. In terms of biological role, together with the chaperonin GroEL, plays an essential role in assisting protein folding. The GroEL-GroES system forms a nano-cage that allows encapsulation of the non-native substrate proteins and provides a physical environment optimized to promote and accelerate protein folding. GroES binds to the apical surface of the GroEL ring, thereby capping the opening of the GroEL channel. This Bacillus licheniformis (strain ATCC 14580 / DSM 13 / JCM 2505 / CCUG 7422 / NBRC 12200 / NCIMB 9375 / NCTC 10341 / NRRL NRS-1264 / Gibson 46) protein is Co-chaperonin GroES.